Consider the following 427-residue polypeptide: Histidinol dehydrogenase (427 aa).

The substrate site is built by Ser-232, Gln-254, and His-257. Zn(2+) is bound by residues Gln-254 and His-257. Active-site proton acceptor residues include Glu-322 and His-323. The substrate site is built by His-323, Asp-356, Glu-410, and His-415. Asp-356 is a binding site for Zn(2+). A Zn(2+)-binding site is contributed by His-415.

It belongs to the histidinol dehydrogenase family. Zn(2+) is required as a cofactor.

The catalysed reaction is L-histidinol + 2 NAD(+) + H2O = L-histidine + 2 NADH + 3 H(+). It functions in the pathway amino-acid biosynthesis; L-histidine biosynthesis; L-histidine from 5-phospho-alpha-D-ribose 1-diphosphate: step 9/9. Catalyzes the sequential NAD-dependent oxidations of L-histidinol to L-histidinaldehyde and then to L-histidine. This chain is Histidinol dehydrogenase, found in Listeria innocua serovar 6a (strain ATCC BAA-680 / CLIP 11262).